Here is a 157-residue protein sequence, read N- to C-terminus: 2-C-methyl-D-erythritol 2,4-cyclodiphosphate synthase (157 aa).

Positions 9 and 11 each coordinate a divalent metal cation. 4-CDP-2-C-methyl-D-erythritol 2-phosphate is bound by residues 9–11 (DVH) and 35–36 (HS). Position 43 (histidine 43) interacts with a divalent metal cation. Residues 57–59 (DIG), 62–66 (FPDTD), 101–107 (AEKPKMA), 133–136 (TTTE), phenylalanine 140, and arginine 143 contribute to the 4-CDP-2-C-methyl-D-erythritol 2-phosphate site.

Belongs to the IspF family. As to quaternary structure, homotrimer. It depends on a divalent metal cation as a cofactor.

It catalyses the reaction 4-CDP-2-C-methyl-D-erythritol 2-phosphate = 2-C-methyl-D-erythritol 2,4-cyclic diphosphate + CMP. Its pathway is isoprenoid biosynthesis; isopentenyl diphosphate biosynthesis via DXP pathway; isopentenyl diphosphate from 1-deoxy-D-xylulose 5-phosphate: step 4/6. Functionally, involved in the biosynthesis of isopentenyl diphosphate (IPP) and dimethylallyl diphosphate (DMAPP), two major building blocks of isoprenoid compounds. Catalyzes the conversion of 4-diphosphocytidyl-2-C-methyl-D-erythritol 2-phosphate (CDP-ME2P) to 2-C-methyl-D-erythritol 2,4-cyclodiphosphate (ME-CPP) with a corresponding release of cytidine 5-monophosphate (CMP). The protein is 2-C-methyl-D-erythritol 2,4-cyclodiphosphate synthase of Listeria monocytogenes serotype 4b (strain F2365).